Consider the following 430-residue polypeptide: Probable histidine--tRNA ligase, cytoplasmic (430 aa).

The protein belongs to the class-II aminoacyl-tRNA synthetase family.

It is found in the cytoplasm. The catalysed reaction is tRNA(His) + L-histidine + ATP = L-histidyl-tRNA(His) + AMP + diphosphate + H(+). The sequence is that of Probable histidine--tRNA ligase, cytoplasmic from Vairimorpha ceranae (strain BRL01) (Microsporidian parasite).